The sequence spans 114 residues: Gonadotropin subunit beta-1 (114 aa).

A signal peptide spans 1 to 19 (MQLVLMAAVLALAEVGCFG). Cystine bridges form between Cys-20/Cys-66, Cys-32/Cys-80, Cys-37/Cys-114, Cys-43/Cys-92, Cys-47/Cys-94, and Cys-97/Cys-104. A glycan (N-linked (GlcNAc...) asparagine) is linked at Asn-24.

This sequence belongs to the glycoprotein hormones subunit beta family. As to quaternary structure, heterodimer of an alpha and a beta chain.

Its subcellular location is the secreted. Functionally, involved in gametogenesis and steroidogenesis. In Fundulus heteroclitus (Killifish), this protein is Gonadotropin subunit beta-1 (cgba).